Consider the following 273-residue polypeptide: 4-hydroxy-3-methylbut-2-enyl diphosphate reductase (273 aa).

C12 serves as a coordination point for [4Fe-4S] cluster. (2E)-4-hydroxy-3-methylbut-2-enyl diphosphate-binding residues include H36 and H70. Positions 36 and 70 each coordinate dimethylallyl diphosphate. Residues H36 and H70 each coordinate isopentenyl diphosphate. C92 serves as a coordination point for [4Fe-4S] cluster. H120 contributes to the (2E)-4-hydroxy-3-methylbut-2-enyl diphosphate binding site. Residue H120 participates in dimethylallyl diphosphate binding. Isopentenyl diphosphate is bound at residue H120. The Proton donor role is filled by E122. T157 provides a ligand contact to (2E)-4-hydroxy-3-methylbut-2-enyl diphosphate. Residue C185 coordinates [4Fe-4S] cluster. The (2E)-4-hydroxy-3-methylbut-2-enyl diphosphate site is built by S213, S214, N215, and S257. 4 residues coordinate dimethylallyl diphosphate: S213, S214, N215, and S257. The isopentenyl diphosphate site is built by S213, S214, N215, and S257.

It belongs to the IspH family. [4Fe-4S] cluster is required as a cofactor.

It carries out the reaction isopentenyl diphosphate + 2 oxidized [2Fe-2S]-[ferredoxin] + H2O = (2E)-4-hydroxy-3-methylbut-2-enyl diphosphate + 2 reduced [2Fe-2S]-[ferredoxin] + 2 H(+). It catalyses the reaction dimethylallyl diphosphate + 2 oxidized [2Fe-2S]-[ferredoxin] + H2O = (2E)-4-hydroxy-3-methylbut-2-enyl diphosphate + 2 reduced [2Fe-2S]-[ferredoxin] + 2 H(+). It participates in isoprenoid biosynthesis; dimethylallyl diphosphate biosynthesis; dimethylallyl diphosphate from (2E)-4-hydroxy-3-methylbutenyl diphosphate: step 1/1. The protein operates within isoprenoid biosynthesis; isopentenyl diphosphate biosynthesis via DXP pathway; isopentenyl diphosphate from 1-deoxy-D-xylulose 5-phosphate: step 6/6. In terms of biological role, catalyzes the conversion of 1-hydroxy-2-methyl-2-(E)-butenyl 4-diphosphate (HMBPP) into a mixture of isopentenyl diphosphate (IPP) and dimethylallyl diphosphate (DMAPP). Acts in the terminal step of the DOXP/MEP pathway for isoprenoid precursor biosynthesis. This Helicobacter hepaticus (strain ATCC 51449 / 3B1) protein is 4-hydroxy-3-methylbut-2-enyl diphosphate reductase.